The following is a 151-amino-acid chain: Deoxyuridine 5'-triphosphate nucleotidohydrolase (151 aa).

Substrate-binding positions include 70–72 (RSG), N83, 87–89 (LID), and M97.

This sequence belongs to the dUTPase family. As to quaternary structure, homotrimer. Requires Mg(2+) as cofactor.

It catalyses the reaction dUTP + H2O = dUMP + diphosphate + H(+). It functions in the pathway pyrimidine metabolism; dUMP biosynthesis; dUMP from dCTP (dUTP route): step 2/2. This enzyme is involved in nucleotide metabolism: it produces dUMP, the immediate precursor of thymidine nucleotides and it decreases the intracellular concentration of dUTP so that uracil cannot be incorporated into DNA. The sequence is that of Deoxyuridine 5'-triphosphate nucleotidohydrolase from Escherichia fergusonii (strain ATCC 35469 / DSM 13698 / CCUG 18766 / IAM 14443 / JCM 21226 / LMG 7866 / NBRC 102419 / NCTC 12128 / CDC 0568-73).